We begin with the raw amino-acid sequence, 546 residues long: Chaperonin GroEL 2 (546 aa).

ATP contacts are provided by residues 30–33, K51, 87–91, G415, and D496; these read TLGP and DGTTT.

Belongs to the chaperonin (HSP60) family. Forms a cylinder of 14 subunits composed of two heptameric rings stacked back-to-back. Interacts with the co-chaperonin GroES.

The protein localises to the cytoplasm. The enzyme catalyses ATP + H2O + a folded polypeptide = ADP + phosphate + an unfolded polypeptide.. Functionally, together with its co-chaperonin GroES, plays an essential role in assisting protein folding. The GroEL-GroES system forms a nano-cage that allows encapsulation of the non-native substrate proteins and provides a physical environment optimized to promote and accelerate protein folding. The protein is Chaperonin GroEL 2 of Bradyrhizobium sp. (strain ORS 278).